Here is a 104-residue protein sequence, read N- to C-terminus: Large ribosomal subunit protein uL24 (104 aa).

Belongs to the universal ribosomal protein uL24 family. Part of the 50S ribosomal subunit.

Its function is as follows. One of two assembly initiator proteins, it binds directly to the 5'-end of the 23S rRNA, where it nucleates assembly of the 50S subunit. In terms of biological role, one of the proteins that surrounds the polypeptide exit tunnel on the outside of the subunit. In Chelativorans sp. (strain BNC1), this protein is Large ribosomal subunit protein uL24.